The sequence spans 195 residues: Imidazoleglycerol-phosphate dehydratase (195 aa).

This sequence belongs to the imidazoleglycerol-phosphate dehydratase family.

The protein localises to the cytoplasm. The catalysed reaction is D-erythro-1-(imidazol-4-yl)glycerol 3-phosphate = 3-(imidazol-4-yl)-2-oxopropyl phosphate + H2O. The protein operates within amino-acid biosynthesis; L-histidine biosynthesis; L-histidine from 5-phospho-alpha-D-ribose 1-diphosphate: step 6/9. This Methylorubrum extorquens (strain CM4 / NCIMB 13688) (Methylobacterium extorquens) protein is Imidazoleglycerol-phosphate dehydratase.